A 562-amino-acid polypeptide reads, in one-letter code: Catalase T (562 aa).

Active-site residues include His64 and Asn137. Tyr351 is a binding site for heme.

The protein belongs to the catalase family. Homotetramer. Heme is required as a cofactor.

It localises to the cytoplasm. It catalyses the reaction 2 H2O2 = O2 + 2 H2O. Functionally, occurs in almost all aerobically respiring organisms and serves to protect cells from the toxic effects of hydrogen peroxide. In Saccharomyces cerevisiae (strain YJM789) (Baker's yeast), this protein is Catalase T (CTT1).